Here is a 100-residue protein sequence, read N- to C-terminus: Enhancer of yellow 2 transcription factor (100 aa).

The protein belongs to the ENY2 family. As to quaternary structure, component of the nuclear pore complex (NPC)-associated AMEX complex (anchoring and mRNA export complex), composed of at least e(y)2 and xmas-2. Component of the SAGA transcription coactivator-HAT complexes, at least composed of Ada2b, e(y)2, Pcaf/Gcn5, Taf10 and Nipped-A/Trrap. Within the SAGA complex, e(y)2, Sgf11, and not/nonstop form an additional subcomplex of SAGA called the DUB module (deubiquitination module). Component of the THO complex, composed of at least e(y)2, HPR1, THO2, THOC5, THOC6 and THOC7. Interacts with e(y)1. Interacts with su(Hw) (via zinc fingers). Interacts with xmas-2; required for localization to the nuclear periphery. Interacts with the nuclear pore complex (NPC).

The protein resides in the nucleus. The protein localises to the nucleoplasm. It is found in the cytoplasm. In terms of biological role, involved in mRNA export coupled transcription activation by association with both the AMEX and the SAGA complexes. The SAGA complex is a multiprotein complex that activates transcription by remodeling chromatin and mediating histone acetylation and deubiquitination. Within the SAGA complex, participates in a subcomplex that specifically deubiquitinates histone H2B. The SAGA complex is recruited to specific gene promoters by activators, where it is required for transcription. Required for nuclear receptor-mediated transactivation. Involved in transcription elongation by recruiting the THO complex onto nascent mRNA. The AMEX complex functions in docking export-competent ribonucleoprotein particles (mRNPs) to the nuclear entrance of the nuclear pore complex (nuclear basket). AMEX participates in mRNA export and accurate chromatin positioning in the nucleus by tethering genes to the nuclear periphery. This is Enhancer of yellow 2 transcription factor from Drosophila persimilis (Fruit fly).